We begin with the raw amino-acid sequence, 117 residues long: Large ribosomal subunit protein bL20 (117 aa).

Belongs to the bacterial ribosomal protein bL20 family.

In terms of biological role, binds directly to 23S ribosomal RNA and is necessary for the in vitro assembly process of the 50S ribosomal subunit. It is not involved in the protein synthesizing functions of that subunit. This is Large ribosomal subunit protein bL20 from Rickettsia felis (strain ATCC VR-1525 / URRWXCal2) (Rickettsia azadi).